Here is a 141-residue protein sequence, read N- to C-terminus: Protein C19orf12 homolog (141 aa).

A helical transmembrane segment spans residues 37-57 (GLAFAGGLIGGPLGIAVGGAV).

This sequence belongs to the C19orf12 family.

The protein resides in the mitochondrion. The protein localises to the mitochondrion membrane. Its subcellular location is the endoplasmic reticulum. It localises to the cytoplasm. It is found in the cytosol. The sequence is that of Protein C19orf12 homolog from Danio rerio (Zebrafish).